The chain runs to 238 residues: MLKYLNQAEAIKVDQILFNEYKFSVDQLMELAGLSCAHAVAKCFPSPCQGNDDKAGKLRVLVCCGPGNNGGDGLVCARHLALMGYEPTIYYPKPTAKPLYENLHHQCELMEISTISQCPSVEEAAHSYHLIVDALFGFSFKPPVRSDFLSVMELMQQTKIPIASIDIPSGWDVEKGKLNDCELEPKLLISLTAPKLCAKHFKGQYHYLGGRFVPPALQRQYELNLPNYPGTELCVKLS.

The region spanning 10-225 (AIKVDQILFN…ALQRQYELNL (216 aa)) is the YjeF N-terminal domain. Position 68-72 (68-72 (NNGGD)) interacts with (6S)-NADPHX. Positions 69 and 133 each coordinate K(+). (6S)-NADPHX-binding positions include 137–143 (GFSFKPP) and aspartate 166. Residue serine 169 coordinates K(+).

It belongs to the NnrE/AIBP family. It depends on K(+) as a cofactor.

It carries out the reaction (6R)-NADHX = (6S)-NADHX. The enzyme catalyses (6R)-NADPHX = (6S)-NADPHX. Functionally, catalyzes the epimerization of the S- and R-forms of NAD(P)HX, a damaged form of NAD(P)H that is a result of enzymatic or heat-dependent hydration. This is a prerequisite for the S-specific NAD(P)H-hydrate dehydratase to allow the repair of both epimers of NAD(P)HX. In Drosophila willistoni (Fruit fly), this protein is NAD(P)H-hydrate epimerase.